We begin with the raw amino-acid sequence, 457 residues long: MPSEIITLQLGQCGNQIGFEFWKRLCLEHGISPDGVLEDFATDGQDRKDVFFYQADDNHYIPRAVLIDLEPRVINNIMTSPYSKLYNQENVFLSKHGGGAGNNWASGFSQGEKVQEEVFDILDREADGSDSLEGFVLCHSIAGGTGSGMGSYVLERLSERFPKKLIQTYSVFPNQDEISDVVVQPYNSILTLKRLTKCADSVVVLDNTALNRIATERLHIQTPTFTQINNLVSTIMSLSTTTLRYPSYMNNNLIGLTASLIPTPQLHFLMTGYTPLMSDCETKTSVRKTTVLDVMRRLLQPKNMMVSALTDKQSRQCFVSILNIIQGEVDPSQVHKSLQRIRERKLANFIPWGPASIQVALPRSSPYVQSAHKVSGLMMANHTGISSLFKRALAQYDKLRKRNAFLDNFRRESMFQDDLTELDIARDTVDCLVQEYEAATQIDYPQWSPAVEASKAG.

Residue 142–148 participates in GTP binding; it reads AGGTGSG.

It belongs to the tubulin family. As to quaternary structure, interacts with Ote. Expressed in nurse cells and oocytes of developing egg chambers.

It is found in the cytoplasm. It localises to the cytoskeleton. The protein resides in the microtubule organizing center. The protein localises to the centrosome. Its subcellular location is the spindle. Tubulin is the major constituent of microtubules. The gamma chain is found at microtubule organizing centers (MTOC) such as the spindle poles or the centrosome, suggesting that it is involved in the minus-end nucleation of microtubule assembly. Required for oocyte activation and consequently for organization of the female meiotic spindle. Essential for centrosome organization and assembly of biastral mitotic spindles in embryos. Plays a role in stabilizing the augmin complex on the meiotic spindle. In Drosophila melanogaster (Fruit fly), this protein is Tubulin gamma-2 chain (gammaTub37C).